We begin with the raw amino-acid sequence, 171 residues long: Large ribosomal subunit protein uL10 (171 aa).

The protein belongs to the universal ribosomal protein uL10 family. Part of the ribosomal stalk of the 50S ribosomal subunit. The N-terminus interacts with L11 and the large rRNA to form the base of the stalk. The C-terminus forms an elongated spine to which L12 dimers bind in a sequential fashion forming a multimeric L10(L12)X complex.

Forms part of the ribosomal stalk, playing a central role in the interaction of the ribosome with GTP-bound translation factors. In Sphingopyxis alaskensis (strain DSM 13593 / LMG 18877 / RB2256) (Sphingomonas alaskensis), this protein is Large ribosomal subunit protein uL10.